Consider the following 336-residue polypeptide: Aspartate--ammonia ligase (336 aa).

The protein belongs to the class-II aminoacyl-tRNA synthetase family. AsnA subfamily.

It is found in the cytoplasm. It catalyses the reaction L-aspartate + NH4(+) + ATP = L-asparagine + AMP + diphosphate + H(+). The protein operates within amino-acid biosynthesis; L-asparagine biosynthesis; L-asparagine from L-aspartate (ammonia route): step 1/1. This Clostridium perfringens (strain ATCC 13124 / DSM 756 / JCM 1290 / NCIMB 6125 / NCTC 8237 / Type A) protein is Aspartate--ammonia ligase.